The sequence spans 1214 residues: ATP-dependent helicase/nuclease subunit A (1214 aa).

The UvrD-like helicase ATP-binding domain occupies 27–483 (HKRTAQQIEA…ILLKENFRSQ (457 aa)). 48-55 (ASAGSGKT) lines the ATP pocket. The 289-residue stretch at 512–800 (QLVAGSEAQK…NLMTIHKSKG (289 aa)) folds into the UvrD-like helicase C-terminal domain.

This sequence belongs to the helicase family. AddA subfamily. As to quaternary structure, heterodimer of AddA and AddB/RexB. The cofactor is Mg(2+).

The catalysed reaction is Couples ATP hydrolysis with the unwinding of duplex DNA by translocating in the 3'-5' direction.. It carries out the reaction ATP + H2O = ADP + phosphate + H(+). The heterodimer acts as both an ATP-dependent DNA helicase and an ATP-dependent, dual-direction single-stranded exonuclease. Recognizes the chi site generating a DNA molecule suitable for the initiation of homologous recombination. The AddA nuclease domain is required for chi fragment generation; this subunit has the helicase and 3' -&gt; 5' nuclease activities. This Streptococcus equi subsp. zooepidemicus (strain MGCS10565) protein is ATP-dependent helicase/nuclease subunit A.